Consider the following 339-residue polypeptide: MSSGRGSRIPEYWYGQVPVPPFMRFMEVIYAGAVSLRRLAYRRGWRRRYGVAVPVVVIGNLVAGGTGKTPLTIEIVARLREAGWTPGIASRGYGRRDLKTPRWIQPDTPIELAGDEPAMIAWKTGMRVRVDVDRSAAACALVAEGCDIVVCDDGLQHYRLMRDIEIEVIDGQRRYGNGHLLPAGPLREPMVRGRLCDFRVLNAGQYSDRPTSGFGPGDWQMRLHIDHAQSLQGSRRRSLDAFSGQRVHAVAGIAHPERFFSMLRQRGIGVVPHAFPDHHFYRAEDFTFGSRLPVLMTEKDAVKCRAFADDWFFSVPLRVELPTVFWTALFDRLERLVSC.

Position 62 to 69 (62 to 69) interacts with ATP; that stretch reads VAGGTGKT.

It belongs to the LpxK family.

It catalyses the reaction a lipid A disaccharide + ATP = a lipid IVA + ADP + H(+). The protein operates within glycolipid biosynthesis; lipid IV(A) biosynthesis; lipid IV(A) from (3R)-3-hydroxytetradecanoyl-[acyl-carrier-protein] and UDP-N-acetyl-alpha-D-glucosamine: step 6/6. Functionally, transfers the gamma-phosphate of ATP to the 4'-position of a tetraacyldisaccharide 1-phosphate intermediate (termed DS-1-P) to form tetraacyldisaccharide 1,4'-bis-phosphate (lipid IVA). The protein is Tetraacyldisaccharide 4'-kinase of Xylella fastidiosa (strain M12).